The sequence spans 570 residues: Sulfite reductase [NADPH] hemoprotein beta-component (570 aa).

4 residues coordinate [4Fe-4S] cluster: Cys-434, Cys-440, Cys-479, and Cys-483. Cys-483 provides a ligand contact to siroheme.

Belongs to the nitrite and sulfite reductase 4Fe-4S domain family. As to quaternary structure, alpha(8)-beta(8). The alpha component is a flavoprotein, the beta component is a hemoprotein. It depends on siroheme as a cofactor. Requires [4Fe-4S] cluster as cofactor.

The catalysed reaction is hydrogen sulfide + 3 NADP(+) + 3 H2O = sulfite + 3 NADPH + 4 H(+). Its pathway is sulfur metabolism; hydrogen sulfide biosynthesis; hydrogen sulfide from sulfite (NADPH route): step 1/1. Functionally, component of the sulfite reductase complex that catalyzes the 6-electron reduction of sulfite to sulfide. This is one of several activities required for the biosynthesis of L-cysteine from sulfate. This chain is Sulfite reductase [NADPH] hemoprotein beta-component, found in Salmonella dublin (strain CT_02021853).